Reading from the N-terminus, the 239-residue chain is Fatty acid metabolism regulator protein (239 aa).

Residues 6–74 enclose the HTH gntR-type domain; the sequence is QSPAGFAEEY…HGKPTKVNNF (69 aa). The H-T-H motif DNA-binding region spans 34 to 53; that stretch reads ERELSELIGVTRTTLREVLQ.

As to quaternary structure, homodimer.

The protein resides in the cytoplasm. Multifunctional regulator of fatty acid metabolism. Represses transcription of at least eight genes required for fatty acid transport and beta-oxidation including fadA, fadB, fadD, fadL and fadE. Activates transcription of at least three genes required for unsaturated fatty acid biosynthesis: fabA, fabB and iclR, the gene encoding the transcriptional regulator of the aceBAK operon encoding the glyoxylate shunt enzymes. Binding of FadR is specifically inhibited by long chain fatty acyl-CoA compounds. The sequence is that of Fatty acid metabolism regulator protein from Salmonella typhi.